The primary structure comprises 295 residues: Small ribosomal subunit biogenesis GTPase RsgA (295 aa).

In terms of domain architecture, CP-type G spans K65–L223. GTP contacts are provided by residues N114–D117 and G165–S173. The Zn(2+) site is built by C246, C251, H253, and C259.

The protein belongs to the TRAFAC class YlqF/YawG GTPase family. RsgA subfamily. Monomer. Associates with 30S ribosomal subunit, binds 16S rRNA. Requires Zn(2+) as cofactor.

It localises to the cytoplasm. Its function is as follows. One of several proteins that assist in the late maturation steps of the functional core of the 30S ribosomal subunit. Helps release RbfA from mature subunits. May play a role in the assembly of ribosomal proteins into the subunit. Circularly permuted GTPase that catalyzes slow GTP hydrolysis, GTPase activity is stimulated by the 30S ribosomal subunit. This Caldanaerobacter subterraneus subsp. tengcongensis (strain DSM 15242 / JCM 11007 / NBRC 100824 / MB4) (Thermoanaerobacter tengcongensis) protein is Small ribosomal subunit biogenesis GTPase RsgA.